Here is a 191-residue protein sequence, read N- to C-terminus: Adenylate kinase (191 aa).

12–17 contacts ATP; that stretch reads GSGKTT. Residues 34 to 63 are NMP; sequence STGDLLRAESAKKTERGLLIEKFTSQGELV. Residues Thr-35, Arg-40, 61–63, 88–91, and Gln-95 each bind AMP; these read ELV and GYPR. The LID stretch occupies residues 130-136; the sequence is GRSRGAD. Arg-131 is an ATP binding site. The AMP site is built by Arg-133 and Arg-145. An ATP-binding site is contributed by Arg-173.

It belongs to the adenylate kinase family. In terms of assembly, monomer.

It localises to the cytoplasm. The catalysed reaction is AMP + ATP = 2 ADP. The protein operates within purine metabolism; AMP biosynthesis via salvage pathway; AMP from ADP: step 1/1. In terms of biological role, catalyzes the reversible transfer of the terminal phosphate group between ATP and AMP. Plays an important role in cellular energy homeostasis and in adenine nucleotide metabolism. The polypeptide is Adenylate kinase (Helicobacter pylori (strain G27)).